Reading from the N-terminus, the 344-residue chain is Phosphoribosylformylglycinamidine cyclo-ligase (344 aa).

The protein belongs to the AIR synthase family.

It localises to the cytoplasm. It carries out the reaction 2-formamido-N(1)-(5-O-phospho-beta-D-ribosyl)acetamidine + ATP = 5-amino-1-(5-phospho-beta-D-ribosyl)imidazole + ADP + phosphate + H(+). It participates in purine metabolism; IMP biosynthesis via de novo pathway; 5-amino-1-(5-phospho-D-ribosyl)imidazole from N(2)-formyl-N(1)-(5-phospho-D-ribosyl)glycinamide: step 2/2. The polypeptide is Phosphoribosylformylglycinamidine cyclo-ligase (Neisseria meningitidis serogroup B (strain ATCC BAA-335 / MC58)).